Reading from the N-terminus, the 652-residue chain is Acetyl-coenzyme A synthetase (652 aa).

CoA contacts are provided by residues 191-194 (RAGR), threonine 311, and asparagine 335. ATP contacts are provided by residues 387–389 (GEP), 411–416 (DTWWQT), aspartate 500, and arginine 515. Position 523 (serine 523) interacts with CoA. Arginine 526 contacts ATP. Residues valine 537, histidine 539, and isoleucine 542 each contribute to the Mg(2+) site. Arginine 584 lines the CoA pocket. Lysine 609 is modified (N6-acetyllysine).

The protein belongs to the ATP-dependent AMP-binding enzyme family. The cofactor is Mg(2+). Acetylated. Deacetylation by the SIR2-homolog deacetylase activates the enzyme.

It catalyses the reaction acetate + ATP + CoA = acetyl-CoA + AMP + diphosphate. Its function is as follows. Catalyzes the conversion of acetate into acetyl-CoA (AcCoA), an essential intermediate at the junction of anabolic and catabolic pathways. Acs undergoes a two-step reaction. In the first half reaction, Acs combines acetate with ATP to form acetyl-adenylate (AcAMP) intermediate. In the second half reaction, it can then transfer the acetyl group from AcAMP to the sulfhydryl group of CoA, forming the product AcCoA. Functionally, enables the cell to use acetate during aerobic growth to generate energy via the TCA cycle, and biosynthetic compounds via the glyoxylate shunt. Acetylates CheY, the response regulator involved in flagellar movement and chemotaxis. The chain is Acetyl-coenzyme A synthetase from Salmonella typhi.